Reading from the N-terminus, the 465-residue chain is GTPase Der (465 aa).

EngA-type G domains are found at residues 3-166 and 184-358; these read FLVA…LNEY and IHFS…ACAS. Residues 9–16, 56–60, 118–121, 190–197, 237–241, and 302–305 each bind GTP; these read GRANVGKS, DTGGI, NKVD, GRPNVGKS, DTAGV, and NKWD. The region spanning 359–443 is the KH-like domain; that stretch reads KKITTADATR…PIVFEFKQSE (85 aa). The tract at residues 446–465 is disordered; that stretch reads FADRKNKRSKDEGSKSKKVK.

The protein belongs to the TRAFAC class TrmE-Era-EngA-EngB-Septin-like GTPase superfamily. EngA (Der) GTPase family. In terms of assembly, associates with the 50S ribosomal subunit.

GTPase that plays an essential role in the late steps of ribosome biogenesis. The polypeptide is GTPase Der (Francisella tularensis subsp. tularensis (strain FSC 198)).